We begin with the raw amino-acid sequence, 204 residues long: Protease (204 aa).

Catalysis depends on residues H54, D71, and C121.

It belongs to the peptidase C5 family. As to quaternary structure, interacts with protease cofactor pVI-C; this interaction is necessary for protease activation.

Its subcellular location is the virion. The protein resides in the host nucleus. The catalysed reaction is Cleaves proteins of the adenovirus and its host cell at two consensus sites: -Yaa-Xaa-Gly-Gly-|-Xaa- and -Yaa-Xaa-Gly-Xaa-|-Gly- (in which Yaa is Met, Ile or Leu, and Xaa is any amino acid).. Its activity is regulated as follows. Requires DNA and protease cofactor for maximal activation. Inside nascent virions, becomes partially activated by binding to the viral DNA, allowing it to cleave the cofactor that binds to the protease and fully activates it. Actin, like the viral protease cofactor, seems to act as a cofactor in the cleavage of cytokeratin 18 and of actin itself. Functionally, cleaves viral precursor proteins (pTP, pIIIa, pVI, pVII, pVIII, and pX) inside newly assembled particles giving rise to mature virions. Protease complexed to its cofactor slides along the viral DNA to specifically locate and cleave the viral precursors. Mature virions have a weakened organization compared to the unmature virions, thereby facilitating subsequent uncoating. Without maturation, the particle lacks infectivity and is unable to uncoat. Late in adenovirus infection, in the cytoplasm, may participate in the cytoskeleton destruction. Cleaves host cell cytoskeletal keratins K7 and K18. The chain is Protease from Frog adenovirus 1 (strain ATCC VR-896) (FrAdV-1).